The chain runs to 304 residues: Aspartate carbamoyltransferase catalytic subunit (304 aa).

2 residues coordinate carbamoyl phosphate: Arg-55 and Thr-56. L-aspartate is bound at residue Lys-83. Residues Arg-105, His-133, and Gln-136 each contribute to the carbamoyl phosphate site. L-aspartate contacts are provided by Arg-166 and Arg-220. 2 residues coordinate carbamoyl phosphate: Gly-261 and Pro-262.

It belongs to the aspartate/ornithine carbamoyltransferase superfamily. ATCase family. In terms of assembly, heterododecamer (2C3:3R2) of six catalytic PyrB chains organized as two trimers (C3), and six regulatory PyrI chains organized as three dimers (R2).

The enzyme catalyses carbamoyl phosphate + L-aspartate = N-carbamoyl-L-aspartate + phosphate + H(+). It functions in the pathway pyrimidine metabolism; UMP biosynthesis via de novo pathway; (S)-dihydroorotate from bicarbonate: step 2/3. Its function is as follows. Catalyzes the condensation of carbamoyl phosphate and aspartate to form carbamoyl aspartate and inorganic phosphate, the committed step in the de novo pyrimidine nucleotide biosynthesis pathway. This is Aspartate carbamoyltransferase catalytic subunit from Caldanaerobacter subterraneus subsp. tengcongensis (strain DSM 15242 / JCM 11007 / NBRC 100824 / MB4) (Thermoanaerobacter tengcongensis).